A 369-amino-acid chain; its full sequence is Putative agmatine deiminase 2 (369 aa).

The Amidino-cysteine intermediate role is filled by Cys356.

Belongs to the agmatine deiminase family.

The catalysed reaction is agmatine + H2O = N-carbamoylputrescine + NH4(+). In Listeria monocytogenes serovar 1/2a (strain ATCC BAA-679 / EGD-e), this protein is Putative agmatine deiminase 2.